Consider the following 211-residue polypeptide: Large ribosomal subunit protein bL9 (211 aa).

Residues 183–211 are disordered; it reads AAASEDEELAETAGVAPAEPSEEDDSAKA. A compositionally biased stretch (acidic residues) spans 202–211; the sequence is PSEEDDSAKA.

This sequence belongs to the bacterial ribosomal protein bL9 family.

In terms of biological role, binds to the 23S rRNA. The polypeptide is Large ribosomal subunit protein bL9 (Roseobacter denitrificans (strain ATCC 33942 / OCh 114) (Erythrobacter sp. (strain OCh 114))).